The sequence spans 329 residues: Flotillin-like protein FloA (329 aa).

Transmembrane regions (helical) follow at residues 4–24 (FIPF…ILSF) and 27–47 (VGLW…TLVG).

The protein belongs to the flotillin-like FloA family. As to quaternary structure, homooligomerizes.

The protein localises to the cell membrane. It localises to the membrane raft. In terms of biological role, found in functional membrane microdomains (FMM) that may be equivalent to eukaryotic membrane rafts. FMMs are highly dynamic and increase in number as cells age. Flotillins are thought to be important factors in membrane fluidity. This is Flotillin-like protein FloA from Alkaliphilus metalliredigens (strain QYMF).